The following is a 157-amino-acid chain: Ribosomal RNA large subunit methyltransferase H (157 aa).

Residues Gly-106 and 125–130 contribute to the S-adenosyl-L-methionine site; that span reads LSEMTF.

The protein belongs to the RNA methyltransferase RlmH family. Homodimer.

The protein localises to the cytoplasm. It catalyses the reaction pseudouridine(1915) in 23S rRNA + S-adenosyl-L-methionine = N(3)-methylpseudouridine(1915) in 23S rRNA + S-adenosyl-L-homocysteine + H(+). Its function is as follows. Specifically methylates the pseudouridine at position 1915 (m3Psi1915) in 23S rRNA. The protein is Ribosomal RNA large subunit methyltransferase H of Syntrophobacter fumaroxidans (strain DSM 10017 / MPOB).